We begin with the raw amino-acid sequence, 235 residues long: Isopentenyl-diphosphate Delta-isomerase I (235 aa).

Lys38 serves as a coordination point for substrate. His42 and His54 together coordinate Mg(2+). The Nudix hydrolase domain occupies 52–204; the sequence is LLHRAFSVFL…GLKLSPWFRL (153 aa). Arg73 and Lys77 together coordinate substrate. Cys89 is a catalytic residue. Residue Ser90 participates in substrate binding. Mg(2+)-binding residues include Glu149 and Glu151. The active site involves Glu151.

This sequence belongs to the IPP isomerase type 1 family. The cofactor is Mg(2+).

It carries out the reaction isopentenyl diphosphate = dimethylallyl diphosphate. Its pathway is isoprenoid biosynthesis; dimethylallyl diphosphate biosynthesis; dimethylallyl diphosphate from isopentenyl diphosphate: step 1/1. It functions in the pathway porphyrin-containing compound metabolism; chlorophyll biosynthesis. In terms of biological role, catalyzes the 1,3-allylic rearrangement of the homoallylic substrate isopentenyl (IPP) to its highly electrophilic allylic isomer, dimethylallyl diphosphate (DMAPP). This is Isopentenyl-diphosphate Delta-isomerase I (IPI1) from Camptotheca acuminata (Happy tree).